The sequence spans 139 residues: Putative pre-16S rRNA nuclease (139 aa).

It belongs to the YqgF nuclease family.

It localises to the cytoplasm. Functionally, could be a nuclease involved in processing of the 5'-end of pre-16S rRNA. The sequence is that of Putative pre-16S rRNA nuclease from Streptococcus equi subsp. zooepidemicus (strain H70).